The sequence spans 129 residues: Follitropin subunit beta (129 aa).

Residues 1-18 form the signal peptide; that stretch reads MKSVQFCFLFCCWRVICC. Disulfide bonds link C21–C69, C35–C84, C38–C122, C46–C100, C50–C102, and C105–C112. N25 and N42 each carry an N-linked (GlcNAc...) asparagine glycan.

It belongs to the glycoprotein hormones subunit beta family. In terms of assembly, heterodimer. The active follitropin is a heterodimer composed of an alpha chain/CGA shared with other hormones and a unique beta chain/FSHB shown here.

It is found in the secreted. In terms of biological role, together with the alpha chain CGA constitutes follitropin, the follicle-stimulating hormone, and provides its biological specificity to the hormone heterodimer. Binds FSHR, a G protein-coupled receptor, on target cells to activate downstream signaling pathways. Follitropin is involved in follicle development and spermatogenesis in reproductive organs. The sequence is that of Follitropin subunit beta (FSHB) from Panthera tigris altaica (Siberian tiger).